The following is a 494-amino-acid chain: Alpha-amylase A (494 aa).

The first 18 residues, 1 to 18 (MFLAKSLVCLALLAVANA), serve as a signal peptide directing secretion. Glutamine 19 is modified (pyrrolidone carboxylic acid). A disulfide bridge links cysteine 46 with cysteine 102. Residues asparagine 116, arginine 165, and aspartate 174 each coordinate Ca(2+). Cysteines 153 and 167 form a disulfide. Arginine 202 provides a ligand contact to chloride. Catalysis depends on aspartate 204, which acts as the Nucleophile. Histidine 208 serves as a coordination point for Ca(2+). The active-site Proton donor is glutamate 241. The chloride site is built by asparagine 304 and arginine 343. Intrachain disulfides connect cysteine 376–cysteine 382 and cysteine 448–cysteine 460.

It belongs to the glycosyl hydrolase 13 family. Monomer. Requires Ca(2+) as cofactor. Chloride serves as cofactor.

The enzyme catalyses Endohydrolysis of (1-&gt;4)-alpha-D-glucosidic linkages in polysaccharides containing three or more (1-&gt;4)-alpha-linked D-glucose units.. The polypeptide is Alpha-amylase A (Amy-d) (Drosophila mauritiana (Fruit fly)).